A 405-amino-acid polypeptide reads, in one-letter code: Accessory Sec system protein translocase subunit SecY2 (405 aa).

10 helical membrane passes run 14–34 (LFTS…LPFV), 65–85 (IFSV…MFSF), 104–124 (MYLT…RLPV), 131–151 (ILVV…LVWL), 156–176 (ASMG…LNIP), 191–211 (GIIV…ALMY), 247–267 (MYVM…GFIF), 285–305 (PLWV…FAFV), 343–363 (FSVI…LFVL), and 368–388 (LLRL…IFTI).

Belongs to the SecY/SEC61-alpha family. SecY2 subfamily. In terms of assembly, component of the accessory SecA2/SecY2 protein translocase complex required to export cell wall proteins. May form heterotrimers with SecE and SecG subunits.

The protein localises to the cell membrane. In terms of biological role, part of the accessory SecA2/SecY2 system specifically required for export of possible cell wall proteins. The central subunit of a protein translocation channel. This Streptococcus pneumoniae serotype 4 (strain ATCC BAA-334 / TIGR4) protein is Accessory Sec system protein translocase subunit SecY2.